A 202-amino-acid chain; its full sequence is Probable host range protein 2-2 (202 aa).

The protein belongs to the poxviridae C7 protein family.

Plays a role for multiplication of the virus in different cell types. In Oryctolagus cuniculus (Rabbit), this protein is Probable host range protein 2-2.